We begin with the raw amino-acid sequence, 139 residues long: Non-structural protein 1 (139 aa).

The DLNP; interaction with MAP1B signature appears at 136–139 (DLNP).

It belongs to the pneumovirus non-structural protein 1 family. Monomer. Homomultimer. Heteromultimer with NS2. Interacts with the matrix protein M. Interacts with host ELOC and CUL2; this interaction allows NS1 to form an active E3 ligase with ELOC and CUL2. Interacts with host IRF3; this interaction leads to the disrupted association of IRF3 with CREBBP and thus reduced binding of IRF3 to the IFN-beta promoter. Interacts with host MAVS; this interaction prevents MAVS binding to RIGI and inhibits signaling pathway leading to interferon production. Interacts with host MAP1B/microtubule-associated protein 1B. Interacts with host TRIM25 (via SPRY domain); this interaction suppresses RIGI ubiquitination and results in decreased interaction between RIGI and MAVS.

It localises to the host cytoplasm. It is found in the host mitochondrion. The protein resides in the host nucleus. In terms of biological role, plays a major role in antagonizing the type I IFN-mediated antiviral response by degrading or inhibiting multiple cellular factors required for either IFN induction or response pathways. Acts cooperatively with NS2 to repress activation and nuclear translocation of host IFN-regulatory factor IRF3. Also disrupts the association of IRF3 with CREBBP. Interacts with host mitochondrial-associated membrane (MAM) MAVS and prevents the interaction with RIGI. Interacts with TRIM25 to suppress TRIM25-mediated RIGI ubiquitination and thereby RIGI-MAVS interaction. Together with NS2, participates in the proteasomal degradation of host STAT2, IRF3, IRF7, TBK1 and RIGI through a NS-degradasome involving CUL2 and Elongin-C. The degradasome requires an intact mitochondrial MAVS. Decreases the levels of host TRAF3 and IKBKE/IKK-epsilon. As functions other than disruptions of the type I IFN-mediated antiviral signaling pathways, induces host SOCS1 and SOCS3 expression. Suppresses premature apoptosis by an NF-kappa-B-dependent, interferon-independent mechanism and thus facilitates virus growth. Additionally, NS1 may serve some inhibitory role in viral transcription and RNA replication. Suppresses proliferation and activation of host CD103+ CD8+ cytotoxic T-lymphocytes and Th17 helper T-lymphocytes. The polypeptide is Non-structural protein 1 (1C) (Homo sapiens (Human)).